Reading from the N-terminus, the 292-residue chain is RNA 5'-monophosphate methyltransferase (292 aa).

Residues 1–22 are disordered; it reads MAASTEQATGGVEKTAAEEKPR. Residues R46, N76, D110, 135–136, and M164 contribute to the S-adenosyl-L-methionine site; that span reads DF. Residues 53-274 form the Bin3-type SAM domain; the sequence is ELLRRLFPQS…KQATETHPIP (222 aa).

This sequence belongs to the methyltransferase superfamily. Interacts with DICER1; the interaction may be mediated by RNA.

It is found in the cytoplasm. The catalysed reaction is a 5'-end 5'-phospho-ribonucleoside-RNA + S-adenosyl-L-methionine = a 5'-end (5'-methylphospho)-ribonucleoside-RNA + S-adenosyl-L-homocysteine. It carries out the reaction a 5'-end 5'-phospho-ribonucleoside-RNA + 2 S-adenosyl-L-methionine = a 5'-end (5'-bismethylphospho)-ribonucleoside-RNA + 2 S-adenosyl-L-homocysteine. O-methyltransferase that specifically monomethylates 5'-monophosphate of cytoplasmic histidyl tRNA (tRNA(His)), acting as a capping enzyme by protecting tRNA(His) from cleavage by DICER1. Also able, with less efficiently, to methylate the 5' monophosphate of a subset of pre-miRNAs, acting as a negative regulator of miRNA processing. The 5' monophosphate of pre-miRNAs is recognized by DICER1 and is required for pre-miRNAs processing: methylation at this position reduces the processing of pre-miRNAs by DICER1. Was also reported to mediate dimethylation of pre-miR-145; however dimethylation cannot be reproduced by another group which observes a monomethylation of pre-miR-145. The protein is RNA 5'-monophosphate methyltransferase (BCDIN3D) of Bos taurus (Bovine).